Reading from the N-terminus, the 549-residue chain is O-fucosyltransferase 29 (549 aa).

Residues 43–63 traverse the membrane as a helical; Signal-anchor for type II membrane protein segment; that stretch reads TVMWTWVCGFMLFSLGVISLF. N-linked (GlcNAc...) asparagine glycosylation occurs at Asn152. 292-294 contributes to the substrate binding site; that stretch reads HLR. Asn359 and Asn527 each carry an N-linked (GlcNAc...) asparagine glycan. Positions 506–549 are disordered; that stretch reads PFSYDKTSTDDEEEDMSEENHNSTSPGHVHLSSADNERDEVFPD. The segment covering 540–549 has biased composition (basic and acidic residues); sequence DNERDEVFPD.

This sequence belongs to the glycosyltransferase GT106 family.

It is found in the membrane. The protein operates within glycan metabolism. This is O-fucosyltransferase 29 from Arabidopsis thaliana (Mouse-ear cress).